The following is a 350-amino-acid chain: D-alanine--D-alanine ligase (350 aa).

One can recognise an ATP-grasp domain in the interval 138 to 346; it reads KSAFSSAGLS…LEQLVHKLIQ (209 aa). Residue 173–228 participates in ATP binding; the sequence is ERELNYPCFVKPANLGSSVGISKVRSRQELEAGLEQAAALDPRLVVEQGVNAREVE. 3 residues coordinate Mg(2+): Asp-299, Glu-313, and Asn-315.

It belongs to the D-alanine--D-alanine ligase family. Requires Mg(2+) as cofactor. Mn(2+) is required as a cofactor.

The protein localises to the cytoplasm. The catalysed reaction is 2 D-alanine + ATP = D-alanyl-D-alanine + ADP + phosphate + H(+). It participates in cell wall biogenesis; peptidoglycan biosynthesis. Cell wall formation. The chain is D-alanine--D-alanine ligase from Synechococcus sp. (strain CC9605).